The following is a 457-amino-acid chain: Choline kinase alpha (457 aa).

Residues 1–86 (MKTKFCTGGE…PPADEQPEPR (86 aa)) form a disordered region. A compositionally biased stretch (low complexity) spans 13-32 (PSPLGLLLSCGSGSAAPAPG). Over residues 55-80 (LALPPPPPLPLPLPLPQPPPPQPPAD) the composition is skewed to pro residues. ATP contacts are provided by residues 117 to 123 (RGGLSNM), Arg-146, and 207 to 213 (QFIPSRR). 119–121 (GLS) serves as a coordination point for phosphocholine. Lys-247 is subject to N6-acetyllysine. Phosphoserine is present on Ser-279. ATP-binding residues include Gln-308 and Asp-330.

It belongs to the choline/ethanolamine kinase family. In terms of assembly, homodimer. Heterodimer with CHKB. As to quaternary structure, monomer; acetylation by KAT5 promotes dissociation of the homodimer and monomerization. (Microbial infection) Interacts with PI4KA/PI4KIIIalpha; CHKA bridges PI4KA/PI4KIIIalpha and hepatitis C virus (HCV) non-structural protein 5A (NS5A) and potentiates NS5A-stimulated PI4KA activity, which then facilitates the targeting of the ternary complex to the ER for viral replication. Phosphorylated at Ser-279 by AMPK in response to glucose deprivation, leading to localization to lipid droplets. In terms of processing, acetylated by KAT5 at Lys-247 following phosphorylation by AMPK, leading to monomerization and conversion into a tyrosine-protein kinase.

The protein resides in the cytoplasm. The protein localises to the cytosol. It is found in the lipid droplet. The catalysed reaction is choline + ATP = phosphocholine + ADP + H(+). It catalyses the reaction ethanolamine + ATP = phosphoethanolamine + ADP + H(+). The enzyme catalyses L-tyrosyl-[protein] + ATP = O-phospho-L-tyrosyl-[protein] + ADP + H(+). Its pathway is phospholipid metabolism; phosphatidylcholine biosynthesis; phosphocholine from choline: step 1/1. The protein operates within phospholipid metabolism; phosphatidylethanolamine biosynthesis; phosphatidylethanolamine from ethanolamine: step 1/3. Homodimerization or heterodimerization is required for the choline and ethanolamine kinase activities. Its function is as follows. Plays a key role in phospholipid biosynthesis by catalyzing the phosphorylation of free choline to phosphocholine, the first step in phosphatidylcholine biosynthesis. Also phosphorylates ethanolamine, thereby contributing to phosphatidylethanolamine biosynthesis. Has higher activity with choline. May contribute to tumor cell growth. In terms of biological role, this isoform plays a key role in lipolysis of lipid droplets following glucose deprivation. In response to glucose deprivation, phosphorylated by AMPK, promoting localization to lipid droplets. Phosphorylation is followed by acetylation by KAT5, leading to dissociation of the homodimer into a monomer. Monomeric CHKA isoform 1 is converted into a tyrosine-protein kinase, which phosphorylates lipid droplet structural proteins PLIN2 and PLIN3, leading to lipolysis of lipid droplets. The chain is Choline kinase alpha (CHKA) from Homo sapiens (Human).